Here is a 100-residue protein sequence, read N- to C-terminus: MICOS complex subunit MIC12 (100 aa).

The chain crosses the membrane as a helical span at residues 10-26; it reads FATISSVAAASLYLYAI.

The protein belongs to the MICOS complex subunit Mic12 family. As to quaternary structure, component of the mitochondrial contact site and cristae organizing system (MICOS) complex.

The protein localises to the mitochondrion inner membrane. Functionally, component of the MICOS complex, a large protein complex of the mitochondrial inner membrane that plays crucial roles in the maintenance of crista junctions, inner membrane architecture, and formation of contact sites to the outer membrane. The chain is MICOS complex subunit MIC12 (AIM5) from Vanderwaltozyma polyspora (strain ATCC 22028 / DSM 70294 / BCRC 21397 / CBS 2163 / NBRC 10782 / NRRL Y-8283 / UCD 57-17) (Kluyveromyces polysporus).